A 461-amino-acid polypeptide reads, in one-letter code: L-seryl-tRNA(Sec) selenium transferase (461 aa).

Position 294 is an N6-(pyridoxal phosphate)lysine (Lys-294).

Belongs to the SelA family. The cofactor is pyridoxal 5'-phosphate.

It is found in the cytoplasm. The catalysed reaction is L-seryl-tRNA(Sec) + selenophosphate + H(+) = L-selenocysteinyl-tRNA(Sec) + phosphate. Its pathway is aminoacyl-tRNA biosynthesis; selenocysteinyl-tRNA(Sec) biosynthesis; selenocysteinyl-tRNA(Sec) from L-seryl-tRNA(Sec) (bacterial route): step 1/1. In terms of biological role, converts seryl-tRNA(Sec) to selenocysteinyl-tRNA(Sec) required for selenoprotein biosynthesis. In Actinobacillus pleuropneumoniae serotype 7 (strain AP76), this protein is L-seryl-tRNA(Sec) selenium transferase.